Consider the following 71-residue polypeptide: Large ribosomal subunit protein uL29 (71 aa).

The protein belongs to the universal ribosomal protein uL29 family.

This chain is Large ribosomal subunit protein uL29 (rpl29), found in Aeropyrum pernix (strain ATCC 700893 / DSM 11879 / JCM 9820 / NBRC 100138 / K1).